The sequence spans 312 residues: 2,3-dihydroxyphenylpropionate/2,3-dihydroxicinnamic acid 1,2-dioxygenase (312 aa).

Catalysis depends on H115, which acts as the Proton donor. H179 functions as the Proton acceptor in the catalytic mechanism.

This sequence belongs to the LigB/MhpB extradiol dioxygenase family. As to quaternary structure, homotetramer. Fe(2+) is required as a cofactor.

It catalyses the reaction 3-(2,3-dihydroxyphenyl)propanoate + O2 = (2Z,4E)-2-hydroxy-6-oxonona-2,4-dienedioate + H(+). The enzyme catalyses (2E)-3-(2,3-dihydroxyphenyl)prop-2-enoate + O2 = (2Z,4E,7E)-2-hydroxy-6-oxonona-2,4,7-trienedioate + H(+). Its pathway is aromatic compound metabolism; 3-phenylpropanoate degradation. Catalyzes the non-heme iron(II)-dependent oxidative cleavage of 2,3-dihydroxyphenylpropionic acid and 2,3-dihydroxicinnamic acid into 2-hydroxy-6-ketononadienedioate and 2-hydroxy-6-ketononatrienedioate, respectively. The sequence is that of 2,3-dihydroxyphenylpropionate/2,3-dihydroxicinnamic acid 1,2-dioxygenase from Azotobacter vinelandii (strain DJ / ATCC BAA-1303).